The following is a 436-amino-acid chain: GTPase Der (436 aa).

2 consecutive EngA-type G domains span residues proline 3–aspartate 168 and isoleucine 177–alanine 352. Residues glycine 9–serine 16, aspartate 56–tyrosine 60, asparagine 120–glutamate 123, glycine 183–serine 190, aspartate 230–leucine 234, and asparagine 295–aspartate 298 each bind GTP. Residues arginine 353–lysine 436 enclose the KH-like domain.

Belongs to the TRAFAC class TrmE-Era-EngA-EngB-Septin-like GTPase superfamily. EngA (Der) GTPase family. Associates with the 50S ribosomal subunit.

Functionally, GTPase that plays an essential role in the late steps of ribosome biogenesis. In Chlorobium phaeovibrioides (strain DSM 265 / 1930) (Prosthecochloris vibrioformis (strain DSM 265)), this protein is GTPase Der.